Here is a 403-residue protein sequence, read N- to C-terminus: Cytochrome P450-SU2 (403 aa).

A disordered region spans residues methionine 1–proline 24. Cysteine 352 provides a ligand contact to heme.

Belongs to the cytochrome P450 family. Heme is required as a cofactor.

Functionally, metabolism of a number of sulfonylurea herbicides. The polypeptide is Cytochrome P450-SU2 (cyp105B1) (Streptomyces griseolus).